Here is a 362-residue protein sequence, read N- to C-terminus: Peptide chain release factor 1 (362 aa).

Position 237 is an N5-methylglutamine (Gln237). Positions 282–296 (QQEEDKRRAEADSTR) are enriched in basic and acidic residues. The segment at 282–304 (QQEEDKRRAEADSTRRSILSTGD) is disordered.

It belongs to the prokaryotic/mitochondrial release factor family. Post-translationally, methylated by PrmC. Methylation increases the termination efficiency of RF1.

It localises to the cytoplasm. In terms of biological role, peptide chain release factor 1 directs the termination of translation in response to the peptide chain termination codons UAG and UAA. This chain is Peptide chain release factor 1, found in Tolumonas auensis (strain DSM 9187 / NBRC 110442 / TA 4).